Reading from the N-terminus, the 515-residue chain is 3-[(3aS,4S,7aS)-7a-methyl-1,5-dioxo-octahydro-1H-inden-4-yl]propanoyl:CoA ligase (515 aa).

Residues 185–193 (TSGTTGRSK), aspartate 398, arginine 413, and lysine 504 contribute to the ATP site.

This sequence belongs to the ATP-dependent AMP-binding enzyme family.

The catalysed reaction is 3-[(3aS,4S,7aS)-7a-methyl-1,5-dioxo-octahydro-1H-inden-4-yl]propanoate + ATP + CoA = 3-[(3aS,4S,7aS)-7a-methyl-1,5-dioxo-octahydro-1H-inden-4-yl]propanoyl-CoA + AMP + diphosphate. Involved in the catabolism of the rings C and D of cholesterol. Catalyzes the ATP-dependent CoA thioesterification of 3aalpha-H-4alpha(3'-propanoate)-7abeta-methylhexahydro-1,5-indanedione (HIP). The protein is 3-[(3aS,4S,7aS)-7a-methyl-1,5-dioxo-octahydro-1H-inden-4-yl]propanoyl:CoA ligase of Rhodococcus jostii (strain RHA1).